Here is a 312-residue protein sequence, read N- to C-terminus: Aquaporin-6 (312 aa).

Over 1 to 50 the chain is Cytoplasmic; it reads MDDKFDDDALPNSKTTAKDYEDKLPEYDYTTTFPNTWMRLREPFREYFAE. A helical transmembrane segment spans residues 51–71; the sequence is FVGVAVLIIFGVGADCQVVLS. Topologically, residues 72–89 are extracellular; sequence ANTGVASSPKGSYLSLNC. Residues 90 to 110 traverse the membrane as a helical segment; that stretch reads GWAIGTAMGVWISGGISGGHI. The short motif at 111–113 is the NPA 1 element; the sequence is NPA. Topologically, residues 111 to 128 are cytoplasmic; it reads NPAVTLAMATWRGFPWWK. A helical membrane pass occupies residues 129 to 149; it reads VPGFIFAQLLGGIVGAGLVYV. The Extracellular segment spans residues 150–183; that stretch reads NYIHAIDIVEGGRHIRTLDTAGLFATYAADYMTN. Asn-183 carries an N-linked (GlcNAc...) asparagine glycan. The helical transmembrane segment at 184–204 threads the bilayer; the sequence is LSCFFSEFLATAVLIIVIHAM. The Cytoplasmic portion of the chain corresponds to 205–213; the sequence is NDKRNTPPP. Residues 214 to 234 form a helical membrane-spanning segment; it reads AGIVPFVLFFLILGIGASLGM. At 235 to 267 the chain is on the extracellular side; it reads ETGYAINPARDLGPRMLTAMVGYGRQVFAFRNQ. An NPA 2 motif is present at residues 241–243; it reads NPA. The chain crosses the membrane as a helical span at residues 268–288; that stretch reads YWIWCPVLAPFLGAQVGTIFY. Residues 289 to 312 are Cytoplasmic-facing; sequence DLFFYKGQDNVFGRLGSHIHISPA.

It belongs to the MIP/aquaporin (TC 1.A.8) family.

It localises to the membrane. The enzyme catalyses H2O(in) = H2O(out). Water channel required to facilitate the transport of water across membranes. Does not mediate the transport carbon dioxide nor nitric oxide across the membrane. Plays a key role in root water transport of mycorrhizal plant such ectomycorrhizal white spruce or trembling aspen via the hydration at the hyphal-root interphase. Contributes in fungal cellular processes during the basidiocarp formation. The protein is Aquaporin-6 of Laccaria bicolor (Bicoloured deceiver).